Reading from the N-terminus, the 187-residue chain is Threonylcarbamoyl-AMP synthase (187 aa).

One can recognise a YrdC-like domain in the interval 4 to 187; that stretch reads NHTDDPFLLD…GHSGQTIRDN (184 aa). The interval 168–187 is disordered; the sequence is GSRSPSKIRHGHSGQTIRDN.

It belongs to the SUA5 family. TsaC subfamily.

The protein localises to the cytoplasm. The catalysed reaction is L-threonine + hydrogencarbonate + ATP = L-threonylcarbamoyladenylate + diphosphate + H2O. Its function is as follows. Required for the formation of a threonylcarbamoyl group on adenosine at position 37 (t(6)A37) in tRNAs that read codons beginning with adenine. Catalyzes the conversion of L-threonine, HCO(3)(-)/CO(2) and ATP to give threonylcarbamoyl-AMP (TC-AMP) as the acyladenylate intermediate, with the release of diphosphate. This Pseudoalteromonas atlantica (strain T6c / ATCC BAA-1087) protein is Threonylcarbamoyl-AMP synthase.